The chain runs to 272 residues: Orotidine 5'-phosphate decarboxylase (272 aa).

Catalysis depends on lysine 95, which acts as the Proton donor.

Belongs to the OMP decarboxylase family. Type 2 subfamily.

The enzyme catalyses orotidine 5'-phosphate + H(+) = UMP + CO2. It participates in pyrimidine metabolism; UMP biosynthesis via de novo pathway; UMP from orotate: step 2/2. This Bordetella petrii (strain ATCC BAA-461 / DSM 12804 / CCUG 43448) protein is Orotidine 5'-phosphate decarboxylase.